We begin with the raw amino-acid sequence, 277 residues long: Ribosomal RNA small subunit methyltransferase A (277 aa).

The S-adenosyl-L-methionine site is built by H20, L22, G47, E71, D94, and N116.

The protein belongs to the class I-like SAM-binding methyltransferase superfamily. rRNA adenine N(6)-methyltransferase family. RsmA subfamily.

The protein resides in the cytoplasm. The enzyme catalyses adenosine(1518)/adenosine(1519) in 16S rRNA + 4 S-adenosyl-L-methionine = N(6)-dimethyladenosine(1518)/N(6)-dimethyladenosine(1519) in 16S rRNA + 4 S-adenosyl-L-homocysteine + 4 H(+). Specifically dimethylates two adjacent adenosines (A1518 and A1519) in the loop of a conserved hairpin near the 3'-end of 16S rRNA in the 30S particle. May play a critical role in biogenesis of 30S subunits. This chain is Ribosomal RNA small subunit methyltransferase A, found in Burkholderia sp.